We begin with the raw amino-acid sequence, 394 residues long: RAB6A-GEF complex partner protein 2 (394 aa).

This sequence belongs to the RGP1 family. As to quaternary structure, forms a complex with RIC1; the interaction enhances RAB6A GTPase activity. Interacts with RIC1. Interacts with RAB6A; the interaction is direct with a preference for RAB6A-GDP. Interacts with RAB33B.

It is found in the cytoplasm. The protein localises to the cytosol. It localises to the membrane. Its function is as follows. The RIC1-RGP1 complex acts as a guanine nucleotide exchange factor (GEF), which activates RAB6A by exchanging bound GDP for free GTP and may thereby required for efficient fusion of endosome-derived vesicles with the Golgi compartment. The RIC1-RGP1 complex participates in the recycling of mannose-6-phosphate receptors. The protein is RAB6A-GEF complex partner protein 2 of Bos taurus (Bovine).